The sequence spans 162 residues: Transcriptional repressor NrdR (162 aa).

Residues 1–21 form a disordered region; that stretch reads MNCPDCGNGRTRVIDTGASSD. A zinc finger spans residues 3–34; sequence CPDCGNGRTRVIDTGASSDGASVRRRRECQRC. The region spanning 49-139 is the ATP-cone domain; that stretch reads LQVKKRDGTI…VYKAFSEPQE (91 aa).

Belongs to the NrdR family. The cofactor is Zn(2+).

Its function is as follows. Negatively regulates transcription of bacterial ribonucleotide reductase nrd genes and operons by binding to NrdR-boxes. The protein is Transcriptional repressor NrdR of Natronomonas pharaonis (strain ATCC 35678 / DSM 2160 / CIP 103997 / JCM 8858 / NBRC 14720 / NCIMB 2260 / Gabara) (Halobacterium pharaonis).